The following is a 398-amino-acid chain: 1-deoxy-D-xylulose 5-phosphate reductoisomerase (398 aa).

T10, G11, S12, I13, G36, K37, N38, and N124 together coordinate NADPH. K125 contributes to the 1-deoxy-D-xylulose 5-phosphate binding site. NADPH is bound at residue E126. D150 is a binding site for Mn(2+). Positions 151, 152, 186, and 209 each coordinate 1-deoxy-D-xylulose 5-phosphate. E152 provides a ligand contact to Mn(2+). Residue G215 coordinates NADPH. Residues S222, N227, K228, and E231 each coordinate 1-deoxy-D-xylulose 5-phosphate. Residue E231 participates in Mn(2+) binding.

Belongs to the DXR family. Homodimer. The cofactor is Mg(2+). It depends on Mn(2+) as a cofactor.

It carries out the reaction 2-C-methyl-D-erythritol 4-phosphate + NADP(+) = 1-deoxy-D-xylulose 5-phosphate + NADPH + H(+). It functions in the pathway isoprenoid biosynthesis; isopentenyl diphosphate biosynthesis via DXP pathway; isopentenyl diphosphate from 1-deoxy-D-xylulose 5-phosphate: step 1/6. In terms of biological role, catalyzes the NADPH-dependent rearrangement and reduction of 1-deoxy-D-xylulose-5-phosphate (DXP) to 2-C-methyl-D-erythritol 4-phosphate (MEP). The protein is 1-deoxy-D-xylulose 5-phosphate reductoisomerase of Salmonella choleraesuis (strain SC-B67).